Reading from the N-terminus, the 228-residue chain is Translin (228 aa).

A DNA/RNA binding region spans residues Arg86–His90. The segment at Leu177–Leu198 is leucine-zipper. At Lys187 the chain carries N6-acetyllysine. Position 190 is a phosphoserine (Ser190). At Lys199 the chain carries N6-acetyllysine.

This sequence belongs to the translin family. Ring-shaped heterooctamer of six TSN and two TSNAX subunits, DNA/RNA binding occurs inside the ring.

Its subcellular location is the cytoplasm. The protein resides in the nucleus. Functionally, DNA-binding protein that specifically recognizes consensus sequences at the breakpoint junctions in chromosomal translocations, mostly involving immunoglobulin (Ig)/T-cell receptor gene segments. Seems to recognize single-stranded DNA ends generated by staggered breaks occurring at recombination hot spots. In terms of biological role, exhibits both single-stranded and double-stranded endoribonuclease activity. May act as an activator of RNA-induced silencing complex (RISC) by facilitating endonucleolytic cleavage of the siRNA passenger strand. This is Translin (TSN) from Cricetulus griseus (Chinese hamster).